The chain runs to 131 residues: Transcription antitermination protein NusB (131 aa).

The protein belongs to the NusB family.

Involved in transcription antitermination. Required for transcription of ribosomal RNA (rRNA) genes. Binds specifically to the boxA antiterminator sequence of the ribosomal RNA (rrn) operons. This is Transcription antitermination protein NusB from Campylobacter fetus subsp. fetus (strain 82-40).